The primary structure comprises 442 residues: uncharacterized protein (442 aa).

A disordered region spans residues 211 to 269 (LDYSTDKPEDSESEDIELEDSESEDSESEDIDQHGGQGPDDDEFNANFDDPQFDEFDFG). The segment covering 221–240 (SESEDIELEDSESEDSESED) has biased composition (acidic residues).

The protein localises to the virion. This is an uncharacterized protein from Acanthamoeba polyphaga (Amoeba).